Consider the following 86-residue polypeptide: Mu-theraphotoxin-Hhn1b 1 (86 aa).

The first 21 residues, 1-21 (MKASMFLALAGLALLFVVCYA), serve as a signal peptide directing secretion. Residues 22-49 (SESEEKEFSNELLSSVLAVDDNSKGEER) constitute a propeptide that is removed on maturation. Intrachain disulfides connect Cys51-Cys66, Cys58-Cys73, and Cys65-Cys80. The residue at position 84 (Ile84) is an Isoleucine amide.

This sequence belongs to the neurotoxin 10 (Hwtx-1) family. 22 (Htx-4) subfamily. Monomer. Expressed by the venom gland.

Its subcellular location is the secreted. Functionally, neurotoxin that selectively inhibits neuronal tetrodotoxin-sensitive voltage-gated sodium channels (Nav) (IC(50)=44.6 nM). It is active on Nav1.2/SCN2A (IC(50)=22.4 nM), Nav1.6/SCN8A (IC(50)=50.1 nM) and Nav1.7/SCN9A (IC(50)=48.9 nM). It shows low affinity for lipid bilayers. This Cyriopagopus hainanus (Chinese bird spider) protein is Mu-theraphotoxin-Hhn1b 1.